The chain runs to 734 residues: Phosphoribosylformylglycinamidine synthase subunit PurL (734 aa).

H49 is an active-site residue. ATP contacts are provided by Y52 and K91. A Mg(2+)-binding site is contributed by E93. Substrate contacts are provided by residues 94–97 and R116; that span reads SHNH. H95 functions as the Proton acceptor in the catalytic mechanism. Residue D117 participates in Mg(2+) binding. Q240 contacts substrate. D268 provides a ligand contact to Mg(2+). 312–314 lines the substrate pocket; that stretch reads ESQ. ATP is bound by residues D491 and G528. N529 is a binding site for Mg(2+). S531 lines the substrate pocket.

It belongs to the FGAMS family. Monomer. Part of the FGAM synthase complex composed of 1 PurL, 1 PurQ and 2 PurS subunits.

The protein localises to the cytoplasm. The catalysed reaction is N(2)-formyl-N(1)-(5-phospho-beta-D-ribosyl)glycinamide + L-glutamine + ATP + H2O = 2-formamido-N(1)-(5-O-phospho-beta-D-ribosyl)acetamidine + L-glutamate + ADP + phosphate + H(+). It participates in purine metabolism; IMP biosynthesis via de novo pathway; 5-amino-1-(5-phospho-D-ribosyl)imidazole from N(2)-formyl-N(1)-(5-phospho-D-ribosyl)glycinamide: step 1/2. Part of the phosphoribosylformylglycinamidine synthase complex involved in the purines biosynthetic pathway. Catalyzes the ATP-dependent conversion of formylglycinamide ribonucleotide (FGAR) and glutamine to yield formylglycinamidine ribonucleotide (FGAM) and glutamate. The FGAM synthase complex is composed of three subunits. PurQ produces an ammonia molecule by converting glutamine to glutamate. PurL transfers the ammonia molecule to FGAR to form FGAM in an ATP-dependent manner. PurS interacts with PurQ and PurL and is thought to assist in the transfer of the ammonia molecule from PurQ to PurL. In Zymomonas mobilis subsp. mobilis (strain ATCC 31821 / ZM4 / CP4), this protein is Phosphoribosylformylglycinamidine synthase subunit PurL.